The following is a 370-amino-acid chain: Cap-specific mRNA (nucleoside-2'-O-)-methyltransferase 1 (370 aa).

The RrmJ-type SAM-dependent 2'-O-MTase domain maps to 87 to 294 (AFRNRAGHKL…ERYLVCIGFI (208 aa)). Residues Gly130 and Asp207 each contribute to the S-adenosyl-L-methionine site. The Proton acceptor role is filled by Lys248.

As to quaternary structure, component of a complex composed of CBF5, GAR1, NHP2, MTR1, NOP10 and Tb11.01.8210.

The protein localises to the nucleus. It catalyses the reaction a 5'-end (N(7)-methyl 5'-triphosphoguanosine)-ribonucleoside in mRNA + S-adenosyl-L-methionine = a 5'-end (N(7)-methyl 5'-triphosphoguanosine)-(2'-O-methyl-ribonucleoside) in mRNA + S-adenosyl-L-homocysteine + H(+). S-adenosyl-L-methionine-dependent methyltransferase that mediates RNA cap1 2'-O-ribose methylation to the 5'-cap structure of spliced leader and U1 small nuclear RNAs. Methylates the ribose of the first nucleotide of a m(7)GpppG-capped RNA to produce m(7)GpppNmp (cap1). Cap1 modification is linked to higher levels of translation. Recognizes a guanosine cap on RNA independent of its N(7) methylation status. The polypeptide is Cap-specific mRNA (nucleoside-2'-O-)-methyltransferase 1 (MTR1) (Trypanosoma brucei brucei (strain 927/4 GUTat10.1)).